We begin with the raw amino-acid sequence, 140 residues long: uncharacterized protein (140 aa).

2 helical membrane passes run 26-43 (YLDL…TGVI) and 64-86 (LLNF…NGVL).

Belongs to the bacteriophage holin family. Cp-1 holin subfamily.

Its subcellular location is the cell membrane. This is an uncharacterized protein from Bacillus subtilis (strain 168).